We begin with the raw amino-acid sequence, 149 residues long: 3-dehydroquinate dehydratase (149 aa).

Residue Tyr26 is the Proton acceptor of the active site. Substrate-binding residues include Asn75, His81, and Asp88. His101 (proton donor) is an active-site residue. Substrate contacts are provided by residues Leu102–Ser103 and Arg112.

This sequence belongs to the type-II 3-dehydroquinase family. As to quaternary structure, homododecamer.

The catalysed reaction is 3-dehydroquinate = 3-dehydroshikimate + H2O. It functions in the pathway metabolic intermediate biosynthesis; chorismate biosynthesis; chorismate from D-erythrose 4-phosphate and phosphoenolpyruvate: step 3/7. Catalyzes a trans-dehydration via an enolate intermediate. The sequence is that of 3-dehydroquinate dehydratase from Shewanella woodyi (strain ATCC 51908 / MS32).